We begin with the raw amino-acid sequence, 517 residues long: Aldehyde dehydrogenase X, mitochondrial (517 aa).

A mitochondrion-targeting transit peptide spans 1 to 17 (MLRFLAPRLLSLQGRTA). N6-acetyllysine is present on Lys51. The residue at position 52 (Lys52) is an N6-acetyllysine; alternate. Lys52 is subject to N6-succinyllysine; alternate. Lys81 is modified (N6-succinyllysine). 262-267 (GSTEVG) is a binding site for NAD(+). Glu285 functions as the Proton acceptor in the catalytic mechanism. Cys319 functions as the Nucleophile in the catalytic mechanism. 5 positions are modified to N6-acetyllysine; alternate: Lys364, Lys383, Lys399, Lys414, and Lys426. Lys364, Lys383, Lys399, Lys414, and Lys426 each carry N6-succinyllysine; alternate. Lys429 carries the N6-acetyllysine modification.

This sequence belongs to the aldehyde dehydrogenase family. Homotetramer.

It is found in the mitochondrion matrix. The catalysed reaction is an aldehyde + NAD(+) + H2O = a carboxylate + NADH + 2 H(+). It participates in alcohol metabolism; ethanol degradation; acetate from ethanol: step 2/2. Its function is as follows. ALDHs play a major role in the detoxification of alcohol-derived acetaldehyde. They are involved in the metabolism of corticosteroids, biogenic amines, neurotransmitters, and lipid peroxidation. The polypeptide is Aldehyde dehydrogenase X, mitochondrial (ALDH1B1) (Pongo abelii (Sumatran orangutan)).